The sequence spans 539 residues: Phosphoenolpyruvate carboxykinase (ATP) (539 aa).

3 residues coordinate substrate: R59, Y200, and K206. ATP is bound by residues K206, H225, and 242–250; that span reads GLSGTGKTT. 2 residues coordinate Mn(2+): K206 and H225. D263 is a Mn(2+) binding site. Residues E291, R327, 447–448, and T453 each bind ATP; that span reads RI. R327 provides a ligand contact to substrate.

Belongs to the phosphoenolpyruvate carboxykinase (ATP) family. Requires Mn(2+) as cofactor.

Its subcellular location is the cytoplasm. The catalysed reaction is oxaloacetate + ATP = phosphoenolpyruvate + ADP + CO2. The protein operates within carbohydrate biosynthesis; gluconeogenesis. Involved in the gluconeogenesis. Catalyzes the conversion of oxaloacetate (OAA) to phosphoenolpyruvate (PEP) through direct phosphoryl transfer between the nucleoside triphosphate and OAA. The polypeptide is Phosphoenolpyruvate carboxykinase (ATP) (Selenomonas ruminantium).